The chain runs to 522 residues: Sorting nexin-1 (522 aa).

Positions 1–142 are disordered; sequence MASGGGGCSA…ELEEEEQEDQ (142 aa). Phosphoserine is present on residues S32 and S39. Over residues 35 to 45 the composition is skewed to acidic residues; that stretch reads EAGDSDTEGED. Residues T41 and T48 each carry the phosphothreonine modification. Residues 55 to 65 show a composition bias toward polar residues; the sequence is KPQSPKKTTSL. Phosphoserine is present on residues S58 and S72. The segment covering 71 to 80 has biased composition (basic and acidic residues); it reads GSKENGIHEE. Residues 98–107 are compositionally biased toward polar residues; the sequence is LDSTQNNQKT. Residues 132–142 show a composition bias toward acidic residues; it reads EELEEEEQEDQ. One can recognise a PX domain in the interval 143–272; it reads FDLTVGITDP…EFLEKEELPR (130 aa). A 1,2-diacyl-sn-glycero-3-phospho-(1D-myo-inositol-3-phosphate)-binding residues include R186, S188, and K214. Residue S188 is modified to Phosphoserine. K237 carries the post-translational modification N6-acetyllysine. Position 238 (R238) interacts with a 1,2-diacyl-sn-glycero-3-phospho-(1D-myo-inositol-3-phosphate). Residue S280 is modified to Phosphoserine. The segment at 281 to 298 is membrane-binding amphipathic helix; the sequence is GAGLLKMFNKATDAVSKM. In terms of domain architecture, BAR spans 302–522; the sequence is MNESDIWFEE…AFLPEARAIS (221 aa).

Belongs to the sorting nexin family. As to quaternary structure, predominantly forms heterodimers with BAR domain-containing sorting nexins SNX5, SNX6 and SNX32; can self-associate to form homodimers. The heterodimers are proposed to self-assemble into helical arrays on the membrane to stabilize and expand local membrane curvature underlying endosomal tubule formation. Thought to be a component of the originally described retromer complex (also called SNX-BAR retromer) which is a pentamer containing the heterotrimeric retromer cargo-selective complex (CSC), also described as vacuolar protein sorting subcomplex (VPS) and a heterodimeric membrane-deforming subcomplex formed between SNX1 or SNX2 and SNX5 or SNX6 (also called SNX-BAR subcomplex); the respective CSC and SNX-BAR subcomplexes associate with low affinity. Interacts with SNX5, SNX6, SNX32, VPS26A, VPS29, VPS35, DRD5, DENND5A, KALRN, RHOG (GDP-bound form). The interaction with SNX2 is reported controversially. Interacts with DNAJC13; prevented by presence of HGS. Interacts with HGS.

The protein localises to the endosome membrane. It is found in the golgi apparatus. It localises to the trans-Golgi network membrane. The protein resides in the early endosome membrane. Its subcellular location is the cell projection. The protein localises to the lamellipodium. In terms of biological role, involved in several stages of intracellular trafficking. Interacts with membranes containing phosphatidylinositol 3-phosphate (PtdIns(3P)) or phosphatidylinositol 3,5-bisphosphate (PtdIns(3,5)P2). Acts in part as component of the retromer membrane-deforming SNX-BAR subcomplex. The SNX-BAR retromer mediates retrograde transport of cargo proteins from endosomes to the trans-Golgi network (TGN) and is involved in endosome-to-plasma membrane transport for cargo protein recycling. The SNX-BAR subcomplex functions to deform the donor membrane into a tubular profile called endosome-to-TGN transport carrier (ETC). Can sense membrane curvature and has in vitro vesicle-to-membrane remodeling activity. Involved in retrograde endosome-to-TGN transport of lysosomal enzyme receptors (IGF2R, M6PR and SORT1). Plays a role in targeting ligand-activated EGFR to the lysosomes for degradation after endocytosis from the cell surface and release from the Golgi. Involvement in retromer-independent endocytic trafficking of P2RY1 and lysosomal degradation of protease-activated receptor-1/F2R. Promotes KALRN- and RHOG-dependent but retromer-independent membrane remodeling such as lamellipodium formation; the function is dependent on GEF activity of KALRN. Required for endocytosis of DRD5 upon agonist stimulation but not for basal receptor trafficking. This chain is Sorting nexin-1 (Snx1), found in Rattus norvegicus (Rat).